The primary structure comprises 924 residues: 104 kDa microneme/rhoptry antigen (924 aa).

Positions 1 to 19 (MKFLILLFNILCLFPVLAA) are cleaved as a signal peptide. A disordered region spans residues 490 to 907 (SKKKLAPITE…KKPKKPDSAY (418 aa)). Basic and acidic residues-rich tracts occupy residues 522–532 (PGDKEGSEGHK) and 573–588 (GPKDPKHPRDPKEPRK). A compositionally biased stretch (low complexity) spans 592–617 (PRTASPTRRPSPKLPQLSKLPKSTSP). The span at 653 to 673 (SFKEKFYDDYSKAASRSKETK) shows a compositional bias: basic and acidic residues. Positions 724-736 (SPSTSPSEFFTPP) are enriched in low complexity. Basic and acidic residues-rich tracts occupy residues 737-747 (ESKRTRFHETP), 770-783 (KSPDEAMKRPRSPS), and 816-825 (DPGRMAKDAS). Acidic residues predominate over residues 857-867 (DDEGTEADDEE). Basic and acidic residues predominate over residues 868 to 878 (THPPEERQKTE). Residues 879 to 901 (VRRRRPPKKPSKSPRPSKPKKPK) show a composition bias toward basic residues. Residue aspartate 904 is the site of GPI-anchor amidated aspartate attachment. A propeptide spans 905-924 (SAYIPSILAILVVSLIVGIL) (removed in mature form).

It is found in the cell membrane. The sequence is that of 104 kDa microneme/rhoptry antigen from Theileria parva (East coast fever infection agent).